A 133-amino-acid polypeptide reads, in one-letter code: Heat shock protein 15 (133 aa).

An S4 RNA-binding domain is found at 9-71; sequence VRLDKWLWAA…DERTVIVKAI (63 aa). The tract at residues 105–133 is disordered; that stretch reads NALTMPHPDRRPDKKERRDLLRFKHGDSE. Residues 111–133 are compositionally biased toward basic and acidic residues; the sequence is HPDRRPDKKERRDLLRFKHGDSE.

It belongs to the HSP15 family. In terms of assembly, monomer.

In terms of biological role, involved in the recycling of free 50S ribosomal subunits that still carry a nascent chain. Binds RNA more specifically than DNA. Binds with very high affinity to the free 50S ribosomal subunit. Does not bind it when it is part of the 70S ribosome. The sequence is that of Heat shock protein 15 (hslR) from Escherichia coli O157:H7.